We begin with the raw amino-acid sequence, 910 residues long: von Willebrand factor A domain-containing protein DDB_G0292740 (910 aa).

The VIT domain occupies 63–194 (AYQYYNVSSF…SITIHITMIS (132 aa)). The disordered stretch occupies residues 297 to 318 (IKNNPHSDSDSDSDDEENKKEN). The VWFA domain maps to 346 to 515 (EFIFLIDCSG…DMETEVMKLL (170 aa)). Residues 703–719 (QYQQQQQQQQQNFNSGF) show a composition bias toward low complexity. Residues 703 to 815 (QYQQQQQQQQ…TQSESTPSND (113 aa)) form a disordered region. A compositionally biased stretch (pro residues) spans 720 to 749 (APPPPPMMSSGPPPPPGSSFGAPPPPPPGG). Over residues 750–802 (AFPTSSISEKKSSSQSSSSYLPPTMSLSRKSSLSPSSPSKNYPSPKLSSPSLS) the composition is skewed to low complexity. A compositionally biased stretch (polar residues) spans 803-815 (YGSTQSESTPSND).

The sequence is that of von Willebrand factor A domain-containing protein DDB_G0292740 from Dictyostelium discoideum (Social amoeba).